The sequence spans 181 residues: Oligoribonuclease (181 aa).

The Exonuclease domain occupies 8–171 (LVWLDMEMTG…ADIYESIDEL (164 aa)). Residue Y129 is part of the active site.

This sequence belongs to the oligoribonuclease family.

It is found in the cytoplasm. Its function is as follows. 3'-to-5' exoribonuclease specific for small oligoribonucleotides. This chain is Oligoribonuclease, found in Bordetella bronchiseptica (strain ATCC BAA-588 / NCTC 13252 / RB50) (Alcaligenes bronchisepticus).